The chain runs to 149 residues: Low molecular weight protein-tyrosine-phosphatase Wzb (149 aa).

Cys9 serves as the catalytic Nucleophile. The active site involves Arg15. The active-site Proton donor is Asp115.

Belongs to the low molecular weight phosphotyrosine protein phosphatase family.

It carries out the reaction O-phospho-L-tyrosyl-[protein] + H2O = L-tyrosyl-[protein] + phosphate. Its pathway is glycan metabolism; exopolysaccharide biosynthesis. Dephosphorylates Wzc. Required for the extracellular polysaccharide colanic acid synthesis. Probably involved in the export of colanic acid from the cell to medium. Involved in protection of cells against contact-dependent growth inhibition (CDI). This chain is Low molecular weight protein-tyrosine-phosphatase Wzb (wzb), found in Salmonella typhimurium (strain LT2 / SGSC1412 / ATCC 700720).